Reading from the N-terminus, the 435-residue chain is GTPase Der (435 aa).

EngA-type G domains lie at 4-167 (PTLA…PSED) and 175-350 (IKFS…ENQT). Residues 10 to 17 (GRPNVGKS), 57 to 61 (DTGGI), 119 to 122 (NKVD), 181 to 188 (GRPNVGKS), 228 to 232 (DTAGI), and 293 to 296 (NKWD) contribute to the GTP site. Residues 351 to 435 (RRIQSSVLND…PIHIIARKRK (85 aa)) enclose the KH-like domain.

Belongs to the TRAFAC class TrmE-Era-EngA-EngB-Septin-like GTPase superfamily. EngA (Der) GTPase family. Associates with the 50S ribosomal subunit.

Its function is as follows. GTPase that plays an essential role in the late steps of ribosome biogenesis. This Lacticaseibacillus casei (strain BL23) (Lactobacillus casei) protein is GTPase Der.